A 418-amino-acid polypeptide reads, in one-letter code: tRNA-2-methylthio-N(6)-dimethylallyladenosine synthase (418 aa).

The 117-residue stretch at 2-118 folds into the MTTase N-terminal domain; the sequence is PGYYLWTIGC…WGEIPEGFIL (117 aa). [4Fe-4S] cluster contacts are provided by cysteine 11, cysteine 47, cysteine 81, cysteine 134, cysteine 138, and cysteine 141. A Radical SAM core domain is found at 120–352; that stretch reads LKPPVSASIT…DLQKETVSKA (233 aa). The TRAM domain occupies 354 to 414; the sequence is SALVDTFAEV…PWSLQAKLVK (61 aa).

It belongs to the methylthiotransferase family. MiaB subfamily. As to quaternary structure, monomer. [4Fe-4S] cluster is required as a cofactor.

It is found in the cytoplasm. It carries out the reaction N(6)-dimethylallyladenosine(37) in tRNA + (sulfur carrier)-SH + AH2 + 2 S-adenosyl-L-methionine = 2-methylsulfanyl-N(6)-dimethylallyladenosine(37) in tRNA + (sulfur carrier)-H + 5'-deoxyadenosine + L-methionine + A + S-adenosyl-L-homocysteine + 2 H(+). Catalyzes the methylthiolation of N6-(dimethylallyl)adenosine (i(6)A), leading to the formation of 2-methylthio-N6-(dimethylallyl)adenosine (ms(2)i(6)A) at position 37 in tRNAs that read codons beginning with uridine. The protein is tRNA-2-methylthio-N(6)-dimethylallyladenosine synthase of Dehalococcoides mccartyi (strain ATCC BAA-2266 / KCTC 15142 / 195) (Dehalococcoides ethenogenes (strain 195)).